A 242-amino-acid chain; its full sequence is Uridylate kinase (242 aa).

K16 to G19 serves as a coordination point for ATP. G58 provides a ligand contact to UMP. G59 and R63 together coordinate ATP. Residues D78 and T139–T146 each bind UMP. ATP is bound by residues T166, Q167, Y172, and D175.

The protein belongs to the UMP kinase family. In terms of assembly, homohexamer.

The protein localises to the cytoplasm. It carries out the reaction UMP + ATP = UDP + ADP. It functions in the pathway pyrimidine metabolism; CTP biosynthesis via de novo pathway; UDP from UMP (UMPK route): step 1/1. Its activity is regulated as follows. Inhibited by UTP. In terms of biological role, catalyzes the reversible phosphorylation of UMP to UDP. This is Uridylate kinase from Rickettsia prowazekii (strain Madrid E).